Here is a 179-residue protein sequence, read N- to C-terminus: uncharacterized protein (179 aa).

This is an uncharacterized protein from Pasteurella multocida (strain Pm70).